The sequence spans 103 residues: Large ribosomal subunit protein uL24 (103 aa).

This sequence belongs to the universal ribosomal protein uL24 family. In terms of assembly, part of the 50S ribosomal subunit.

Its function is as follows. One of two assembly initiator proteins, it binds directly to the 5'-end of the 23S rRNA, where it nucleates assembly of the 50S subunit. One of the proteins that surrounds the polypeptide exit tunnel on the outside of the subunit. The polypeptide is Large ribosomal subunit protein uL24 (Corynebacterium urealyticum (strain ATCC 43042 / DSM 7109)).